The primary structure comprises 113 residues: Chaperone protein SigE (113 aa).

This sequence belongs to the IpgE/SigE chaperone family. As to quaternary structure, homodimer or higher-order oligomers.

The protein localises to the cytoplasm. Its function is as follows. Molecular chaperone required for SopB/SigD stabilization and secretion. This Salmonella paratyphi A (strain ATCC 9150 / SARB42) protein is Chaperone protein SigE (sigE).